The sequence spans 341 residues: MNIVVEFFLVTFKVLWAFVLAAARWLVRPKEKSVAGQVCLITGAGSGLGRLFALEFARRRALLVLWDINTQSNEETAGMVRHIYRDLEAADAAALQAGNGEEEILPPCNLQVFTYTCDVGKRENVYLTAERVRKEVGEVSVLVNNAGVVSGHHLLECPDELIERTMMVNCHAHFWTTKAFLPTMLEINHGHIVTVASSLGLFSTAGVEDYCASKFGVVGFHESLSHELKAAEKDGIKTTLVCPYLVDTGMFRGCRIRKEIEPFLPPLKPDYCVKQAMKAILTDQPMICTPRLMYIVTFMKSILPFEAVVCMYRFLGADKCMYPFIAQRKQATNNNEAKNGI.

A helical; Signal-anchor transmembrane segment spans residues 3–23 (IVVEFFLVTFKVLWAFVLAAA). 40–64 (LITGAGSGLGRLFALEFARRRALLV) contributes to the NADP(+) binding site. A substrate-binding site is contributed by S197. Y210 (proton acceptor) is an active-site residue.

It belongs to the short-chain dehydrogenases/reductases (SDR) family. Detected in retina, entire eyecups and in liver (at protein level).

The protein resides in the microsome membrane. It localises to the endoplasmic reticulum membrane. The enzyme catalyses all-trans-retinol + NADP(+) = all-trans-retinal + NADPH + H(+). It functions in the pathway cofactor metabolism; retinol metabolism. Functionally, retinol dehydrogenase with a clear preference for NADP. Converts all-trans-retinol to all-trans-retinal. The sequence is that of Retinol dehydrogenase 10 (Rdh10) from Rattus norvegicus (Rat).